The primary structure comprises 333 residues: Thiamine-monophosphate kinase (333 aa).

Positions 44, 58, 59, and 60 each coordinate Mg(2+). His-67 serves as a coordination point for substrate. Mg(2+)-binding residues include Asp-89 and Asp-137. Residues Gly-136 to Asp-137 and Arg-162 each bind ATP. Asp-224 contributes to the Mg(2+) binding site. Ser-226 serves as a coordination point for ATP. Asp-227 is a Mg(2+) binding site. Substrate contacts are provided by Glu-278 and Trp-320.

It belongs to the thiamine-monophosphate kinase family.

It catalyses the reaction thiamine phosphate + ATP = thiamine diphosphate + ADP. It participates in cofactor biosynthesis; thiamine diphosphate biosynthesis; thiamine diphosphate from thiamine phosphate: step 1/1. Its function is as follows. Catalyzes the ATP-dependent phosphorylation of thiamine-monophosphate (TMP) to form thiamine-pyrophosphate (TPP), the active form of vitamin B1. The protein is Thiamine-monophosphate kinase of Mycobacterium tuberculosis (strain CDC 1551 / Oshkosh).